Here is a 316-residue protein sequence, read N- to C-terminus: MELRNSTLGSGFILVGILNDSGSPELLYATFTILYMLALTSNGLLLLAITIEARLHMPMYLLLGQLSLMDLLFTSVVTPKALADFLRRENTISFGGCALQMFLALTMGSAEDLLLAFMAYDRYVAICHPLKYMTLMSPRVCWIMVATSWILASLIAIGHTMYTMHLPFCVSWEIRHLLCEIPPLLKLACADTSRYELIIYVTGVTFLLLPISAIVASYTLVLFTVLRMPSNEGRKKALVTCSSHLIVVGMFYGAATFMYVLPSSFHSPKQDNIISVFYTIVTPALNPLIYSLRNKEVMRALRRVLGKYILLAHSTL.

Topologically, residues 1-30 are extracellular; that stretch reads MELRNSTLGSGFILVGILNDSGSPELLYAT. N-linked (GlcNAc...) asparagine glycosylation is found at Asn5 and Asn19. A helical membrane pass occupies residues 31–51; it reads FTILYMLALTSNGLLLLAITI. Residues 52–56 lie on the Cytoplasmic side of the membrane; sequence EARLH. A helical membrane pass occupies residues 57-77; sequence MPMYLLLGQLSLMDLLFTSVV. Residues 78–97 are Extracellular-facing; sequence TPKALADFLRRENTISFGGC. Residues Cys97 and Cys179 are joined by a disulfide bond. Residues 98–118 traverse the membrane as a helical segment; sequence ALQMFLALTMGSAEDLLLAFM. Over 119–139 the chain is Cytoplasmic; that stretch reads AYDRYVAICHPLKYMTLMSPR. Residues 140 to 160 form a helical membrane-spanning segment; that stretch reads VCWIMVATSWILASLIAIGHT. The Extracellular portion of the chain corresponds to 161–205; that stretch reads MYTMHLPFCVSWEIRHLLCEIPPLLKLACADTSRYELIIYVTGVT. Residues 206 to 226 traverse the membrane as a helical segment; it reads FLLLPISAIVASYTLVLFTVL. At 227 to 244 the chain is on the cytoplasmic side; it reads RMPSNEGRKKALVTCSSH. Residues 245-265 form a helical membrane-spanning segment; the sequence is LIVVGMFYGAATFMYVLPSSF. At 266–271 the chain is on the extracellular side; that stretch reads HSPKQD. A helical membrane pass occupies residues 272-292; the sequence is NIISVFYTIVTPALNPLIYSL. Topologically, residues 293–316 are cytoplasmic; that stretch reads RNKEVMRALRRVLGKYILLAHSTL.

Belongs to the G-protein coupled receptor 1 family.

Its subcellular location is the cell membrane. Functionally, odorant receptor. This Homo sapiens (Human) protein is Olfactory receptor 2AG2 (OR2AG2).